The following is a 288-amino-acid chain: Bifunctional protein FolD (288 aa).

Residues 163 to 165, serine 188, and isoleucine 229 each bind NADP(+); that span reads GRS.

It belongs to the tetrahydrofolate dehydrogenase/cyclohydrolase family. As to quaternary structure, homodimer.

It catalyses the reaction (6R)-5,10-methylene-5,6,7,8-tetrahydrofolate + NADP(+) = (6R)-5,10-methenyltetrahydrofolate + NADPH. The catalysed reaction is (6R)-5,10-methenyltetrahydrofolate + H2O = (6R)-10-formyltetrahydrofolate + H(+). The protein operates within one-carbon metabolism; tetrahydrofolate interconversion. Catalyzes the oxidation of 5,10-methylenetetrahydrofolate to 5,10-methenyltetrahydrofolate and then the hydrolysis of 5,10-methenyltetrahydrofolate to 10-formyltetrahydrofolate. The polypeptide is Bifunctional protein FolD (Campylobacter curvus (strain 525.92)).